Here is a 703-residue protein sequence, read N- to C-terminus: Phosphoribosylformylglycinamidine synthase subunit PurL (703 aa).

His36 is a catalytic residue. Residues Tyr39 and Lys80 each coordinate ATP. Glu82 lines the Mg(2+) pocket. Substrate contacts are provided by residues 83 to 86 and Arg105; that span reads SHNH. The Proton acceptor role is filled by His84. Residue Asp106 coordinates Mg(2+). Gln226 provides a ligand contact to substrate. Asp252 is a binding site for Mg(2+). 294-296 provides a ligand contact to substrate; that stretch reads ETQ. Asp468 and Gly505 together coordinate ATP. Ser508 contacts substrate.

This sequence belongs to the FGAMS family. As to quaternary structure, monomer. Part of the FGAM synthase complex composed of 1 PurL, 1 PurQ and 2 PurS subunits.

The protein resides in the cytoplasm. The catalysed reaction is N(2)-formyl-N(1)-(5-phospho-beta-D-ribosyl)glycinamide + L-glutamine + ATP + H2O = 2-formamido-N(1)-(5-O-phospho-beta-D-ribosyl)acetamidine + L-glutamate + ADP + phosphate + H(+). The protein operates within purine metabolism; IMP biosynthesis via de novo pathway; 5-amino-1-(5-phospho-D-ribosyl)imidazole from N(2)-formyl-N(1)-(5-phospho-D-ribosyl)glycinamide: step 1/2. Part of the phosphoribosylformylglycinamidine synthase complex involved in the purines biosynthetic pathway. Catalyzes the ATP-dependent conversion of formylglycinamide ribonucleotide (FGAR) and glutamine to yield formylglycinamidine ribonucleotide (FGAM) and glutamate. The FGAM synthase complex is composed of three subunits. PurQ produces an ammonia molecule by converting glutamine to glutamate. PurL transfers the ammonia molecule to FGAR to form FGAM in an ATP-dependent manner. PurS interacts with PurQ and PurL and is thought to assist in the transfer of the ammonia molecule from PurQ to PurL. In Sulfurisphaera tokodaii (strain DSM 16993 / JCM 10545 / NBRC 100140 / 7) (Sulfolobus tokodaii), this protein is Phosphoribosylformylglycinamidine synthase subunit PurL.